We begin with the raw amino-acid sequence, 298 residues long: Centromere protein O (298 aa).

The disordered stretch occupies residues 29-49; the sequence is NISNRKSEEPAVRKKESSLRT. The segment covering 33–49 has biased composition (basic and acidic residues); the sequence is RKSEEPAVRKKESSLRT. Ser35 carries the phosphoserine modification. Residues 39–74 are a coiled coil; sequence AVRKKESSLRTKIRELRQQRDKLRAEVKQWGARVKE.

The protein belongs to the CENP-O/MCM21 family. As to quaternary structure, component of the CENPA-CAD complex, composed of CENPI, CENPK, CENPL, CENPO, CENPP, CENPQ, CENPR and CENPS. The CENPA-CAD complex interacts with the CENPA-NAC complex, at least composed of CENPA, CENPC, CENPH, CENPM, CENPN, CENPT and CENPU.

It is found in the nucleus. The protein localises to the chromosome. The protein resides in the centromere. It localises to the kinetochore. Functionally, component of the CENPA-CAD (nucleosome distal) complex, a complex recruited to centromeres which is involved in assembly of kinetochore proteins, mitotic progression and chromosome segregation. May be involved in incorporation of newly synthesized CENPA into centromeres via its interaction with the CENPA-NAC complex. Modulates the kinetochore-bound levels of NDC80 complex. This Mus musculus (Mouse) protein is Centromere protein O (Cenpo).